A 318-amino-acid chain; its full sequence is Olfactory receptor 56A1 (318 aa).

The Extracellular portion of the chain corresponds to 1-32 (MIQPMASPSNSSTVPVSEFLLICFPNFQSWQH). N-linked (GlcNAc...) asparagine glycosylation is present at Asn-10. The helical transmembrane segment at 33 to 53 (WLSLPLSLLFLLAMGANTTLL) threads the bilayer. The Cytoplasmic segment spans residues 54-61 (ITIQLEAS). The chain crosses the membrane as a helical span at residues 62 to 82 (LHQPLYYLLSLLSLLDIVLCL). At 83–106 (TVIPKVLAIFWYDLRSISFPACFL) the chain is on the extracellular side. Cys-104 and Cys-196 are disulfide-bonded. Residues 107–127 (QMFIMNSFLPMESCTFMVMAY) traverse the membrane as a helical segment. Over 128–146 (DRYVAICHPLRYPSIITNQ) the chain is Cytoplasmic. The chain crosses the membrane as a helical span at residues 147 to 167 (FVAKASVFIVVRNALLTAPIP). The Extracellular portion of the chain corresponds to 168 to 203 (ILTSLLHYCGENVIENCICANLSVSRLSCDNFTLNR). Asn-188 and Asn-198 each carry an N-linked (GlcNAc...) asparagine glycan. The chain crosses the membrane as a helical span at residues 204 to 224 (IYQFVAGWTLLGSDLFLIFLS). The Cytoplasmic segment spans residues 225 to 244 (YTFILRAVLRFKAEGAAVKA). A helical membrane pass occupies residues 245–265 (LSTCGSHFILILFFSTILLVV). Residues 266–280 (VLTNVARKKVPMDIL) are Extracellular-facing. Residues 281–301 (ILLNVLHHLIPPALNPIVYGV) form a helical membrane-spanning segment. Over 302 to 318 (RTKEIKQGIQKLLQRGR) the chain is Cytoplasmic.

The protein belongs to the G-protein coupled receptor 1 family.

The protein localises to the cell membrane. In terms of biological role, odorant receptor. The chain is Olfactory receptor 56A1 (OR56A1) from Homo sapiens (Human).